A 1891-amino-acid chain; its full sequence is Transcription initiation factor TFIID subunit 1 (1891 aa).

3 disordered regions span residues 1-34 (MGPGWAGLLQDKGGGSPSVVMSDTDSDEESAGGG), 154-180 (KLMPPPPPPPGPLKKEKDQDDITGVSE), and 197-224 (ASEKVDFSSSSDSESEMGPQDAAQSESK). In terms of domain architecture, Protein kinase 1 spans 1–435 (MGPGWAGLLQ…VTQLHWEDDI (435 aa)). The segment covering 156 to 165 (MPPPPPPPGP) has biased composition (pro residues). The span at 197–208 (ASEKVDFSSSSD) shows a compositional bias: low complexity. Residue Ser328 is modified to Phosphoserine; by autocatalysis. The tract at residues 535–556 (PDEKEEATSNSPSKENKKESSL) is disordered. A histone acetyltransferase (HAT) region spans residues 538–997 (KEEATSNSPS…KIPNKPTQQK (460 aa)). An N6-acetyllysine modification is found at Lys565. Residues Lys570 and Lys583 each participate in a glycyl lysine isopeptide (Lys-Gly) (interchain with G-Cter in SUMO2) cross-link. Disordered regions lie at residues 990–1009 (PNKPTQQKDDKEPQPVKKTV), 1128–1148 (MLQNKKTSSQLSREREEQERK), and 1254–1278 (RLKRNQEKEKLKGPPEKKPKKMKER). Composition is skewed to basic and acidic residues over residues 995–1004 (QQKDDKEPQP), 1139–1148 (SREREEQERK), and 1254–1270 (RLKRNQEKEKLKGPPEK). Residues 1216-1294 (VRIRTTKDEE…CGACGAIGHM (79 aa)) constitute a DNA-binding region (HMG box). Positions 1363-1650 (VLKFPKQQLP…TAKEAALEEA (288 aa)) are interaction with ASF1A and ASF1B. Positions 1372 to 1379 (PPKKKRRV) match the Nuclear localization signal motif. Bromo domains lie at 1397–1505 (RRRT…LKEK) and 1519–1628 (LLDD…LTEY). In terms of domain architecture, Protein kinase 2 spans 1446 to 1891 (MDLQTLRENV…AGDTDLDSDE (446 aa)). Disordered regions lie at residues 1651-1676 (ELESLDPMTPGPYTPQPPDLYDNNTS) and 1690-1891 (SNLS…DSDE). Over residues 1659-1668 (TPGPYTPQPP) the composition is skewed to pro residues. 2 positions are modified to phosphoserine: Ser1690 and Ser1693. The span at 1690 to 1708 (SNLSVLDIPSATSEKQLTQ) shows a compositional bias: polar residues. 2 stretches are compositionally biased toward acidic residues: residues 1711–1723 (GDGDGDLADEEEG) and 1741–1756 (EGEDDEEDAGSDEEGD). The span at 1764–1778 (LSESGSDSDVESGSL) shows a compositional bias: low complexity. 3 positions are modified to phosphoserine: Ser1799, Ser1802, and Ser1820. The segment covering 1830-1840 (KSNTQDTSFSS) has biased composition (polar residues). Over residues 1846 to 1855 (VSEEEEDEEE) the composition is skewed to acidic residues. Ser1847 carries the phosphoserine modification. The span at 1858-1867 (SGPSVLSQVH) shows a compositional bias: polar residues.

It belongs to the TAF1 family. In terms of assembly, component of the TFIID basal transcription factor complex, composed of TATA-box-binding protein TBP, and a number of TBP-associated factors (TAFs). TFIID consists of at least TBP, TAF1, TAF2, TAF3, TAF4, TAF5, TAF6, TAF7, TAF8, TAF9, TAF10, TAF11, TAF12 and TAF13. Interacts with TAF7; the interaction is direct. TAF1, when part of the TFIID complex, interacts with C-terminus of TP53. Part of a TFIID-containing RNA polymerase II pre-initiation complex that is composed of TBP and at least GTF2A1, GTF2A2, GTF2E1, GTF2E2, GTF2F1, GTF2H2, GTF2H3, GTF2H4, GTF2H5, GTF2B, TCEA1, ERCC2, ERCC3, TAF1, TAF2, TAF3, TAF4, TAF5, TAF6, TAF7, TAF8, TAF9, TAF10, TAF11, TAF12 and TAF13. Component of some MLL1/MLL complex, at least composed of the core components KMT2A/MLL1, ASH2L, HCFC1/HCF1, WDR5 and RBBP5, as well as the facultative components BACC1, CHD8, E2F6, HSP70, INO80C, KANSL1, LAS1L, MAX, MCRS1, MGA, KAT8/MOF, PELP1, PHF20, PRP31, RING2, RUVB1/TIP49A, RUVB2/TIP49B, SENP3, TAF1, TAF4, TAF6, TAF7, TAF9 and TEX10. RB1 interacts with the N-terminal domain of TAF1. Interacts with ASF1A and ASF1B. Interacts (via bromo domains) with acetylated lysine residues on the N-terminus of histone H1.4, H2A, H2B, H3 and H4 (in vitro). It depends on Mg(2+) as a cofactor. Post-translationally, phosphorylated by casein kinase II in vitro.

It localises to the nucleus. It catalyses the reaction L-seryl-[protein] + ATP = O-phospho-L-seryl-[protein] + ADP + H(+). The catalysed reaction is L-threonyl-[protein] + ATP = O-phospho-L-threonyl-[protein] + ADP + H(+). The enzyme catalyses L-lysyl-[protein] + acetyl-CoA = N(6)-acetyl-L-lysyl-[protein] + CoA + H(+). Autophosphorylates on Ser residues. Inhibited by retinoblastoma tumor suppressor protein, RB1. Binding to TAF1 or CIITA inhibits the histone acetyltransferase activity. Its function is as follows. The TFIID basal transcription factor complex plays a major role in the initiation of RNA polymerase II (Pol II)-dependent transcription. TFIID recognizes and binds promoters with or without a TATA box via its subunit TBP, a TATA-box-binding protein, and promotes assembly of the pre-initiation complex (PIC). The TFIID complex consists of TBP and TBP-associated factors (TAFs), including TAF1, TAF2, TAF3, TAF4, TAF5, TAF6, TAF7, TAF8, TAF9, TAF10, TAF11, TAF12 and TAF13. TAF1 is the largest component and core scaffold of the TFIID complex, involved in nucleating complex assembly. TAF1 forms a promoter DNA binding subcomplex of TFIID, together with TAF7 and TAF2. Contains novel N- and C-terminal Ser/Thr kinase domains which can autophosphorylate or transphosphorylate other transcription factors. Phosphorylates TP53 on 'Thr-55' which leads to MDM2-mediated degradation of TP53. Phosphorylates GTF2A1 and GTF2F1 on Ser residues. Possesses DNA-binding activity. Exhibits histone acetyltransferase activity towards histones H3 and H4. Essential for progression of the G1 phase of the cell cycle. The chain is Transcription initiation factor TFIID subunit 1 from Mus musculus (Mouse).